The sequence spans 708 residues: Ubiquitin thioesterase ZRANB1 (708 aa).

The segment at 3–33 (ERGIKWACEYCTYENWPSAIKCTMCRAQRPS) adopts a RanBP2-type 1 zinc-finger fold. Zn(2+)-binding residues include Cys-10, Cys-13, Cys-24, and Cys-27. Positions 38–73 (TEDPFKSGSSDVGRDWDPSSTEGGSSPLICPDSSAR) are disordered. 2 RanBP2-type zinc fingers span residues 84–113 (NANKWSCHMCTYLNWPRAIRCTQCLSQRRT) and 149–178 (RTQHWTCSVCTYENWAKAKRCVVCDHPRPN). 8 residues coordinate Zn(2+): Cys-90, Cys-93, Cys-104, Cys-107, Cys-155, Cys-158, Cys-169, and Cys-172. Residues 200–225 (RARWRGSCSSGNSQRRSPPATKRDSE) are disordered. A compositionally biased stretch (polar residues) spans 206-215 (SCSSGNSQRR). 2 ANK repeats span residues 260-290 (KKTDWLFLNACVGVVEGDLAAIEAYKSSGGD) and 313-340 (YTLVHLAIRFQRQDMLAILLTEVSQQAA). The tract at residues 392–641 (PTVQEKLFDE…LSAQELGNEE (250 aa)) is TRAF-binding. In terms of domain architecture, OTU spans 432–592 (LYALWNRTAG…RGHFSALVAM (161 aa)). Cys-443 (nucleophile) is an active-site residue. His-585 serves as the catalytic Proton acceptor.

It belongs to the peptidase C64 family. In terms of assembly, interacts with TRAF6. Interacts with APC. Widely expressed.

It localises to the cytoplasm. Its subcellular location is the nucleus. The catalysed reaction is Thiol-dependent hydrolysis of ester, thioester, amide, peptide and isopeptide bonds formed by the C-terminal Gly of ubiquitin (a 76-residue protein attached to proteins as an intracellular targeting signal).. Its function is as follows. Ubiquitin thioesterase, which specifically hydrolyzes 'Lys-29'-linked and 'Lys-33'-linked diubiquitin. Also cleaves 'Lys-63'-linked chains, but with 40-fold less efficiency compared to 'Lys-29'-linked ones. Positive regulator of the Wnt signaling pathway that deubiquitinates APC protein, a negative regulator of Wnt-mediated transcription. Acts as a regulator of autophagy by mediating deubiquitination of PIK3C3/VPS34, thereby promoting autophagosome maturation. Plays a role in the regulation of cell morphology and cytoskeletal organization. Required in the stress fiber dynamics and cell migration. The protein is Ubiquitin thioesterase ZRANB1 of Homo sapiens (Human).